A 42-amino-acid chain; its full sequence is EADEPLWLYKGDNIERAPTTADHPILPSIIDDVKLDPNRRYA.

As to expression, hemolymph.

The protein localises to the secreted. In terms of biological role, antimicrobial protein. Has antibacterial activity against the Gram-positive bacteria M.luteus (MIC=22.7 uM) and L.monocytogenes (MIC=90.9 uM). Lacks antibacterial activity against the Gram-positive bacteria B.circulans, S.aureus, and S.lutea, and the Gram-negative bacteria E.coli D31, E.coli ATCC 25922, and S.typhimurium. Has antifungal activity against A.niger (MIC=90.9 uM) and T.harzianum (MIC=90.9 uM), but lacks antifungal activity against S.cerevisiae, P.pastoris, Z.marxianus, C.albicans, C.fructus, and F.oxysporum. The polypeptide is Lebocin-like anionic peptide 1 (Galleria mellonella (Greater wax moth)).